A 416-amino-acid chain; its full sequence is Multifunctional CCA protein (416 aa).

The ATP site is built by Gly-8 and Arg-11. CTP contacts are provided by Gly-8 and Arg-11. Mg(2+)-binding residues include Asp-21 and Asp-23. ATP-binding residues include Arg-91, Arg-137, and Arg-140. 3 residues coordinate CTP: Arg-91, Arg-137, and Arg-140. The 102-residue stretch at 228–329 (TGVHTLMVLA…VKIFDKADFW (102 aa)) folds into the HD domain.

This sequence belongs to the tRNA nucleotidyltransferase/poly(A) polymerase family. Bacterial CCA-adding enzyme type 1 subfamily. Monomer. Can also form homodimers and oligomers. The cofactor is Mg(2+). Ni(2+) is required as a cofactor.

The catalysed reaction is a tRNA precursor + 2 CTP + ATP = a tRNA with a 3' CCA end + 3 diphosphate. It catalyses the reaction a tRNA with a 3' CCA end + 2 CTP + ATP = a tRNA with a 3' CCACCA end + 3 diphosphate. Its function is as follows. Catalyzes the addition and repair of the essential 3'-terminal CCA sequence in tRNAs without using a nucleic acid template. Adds these three nucleotides in the order of C, C, and A to the tRNA nucleotide-73, using CTP and ATP as substrates and producing inorganic pyrophosphate. tRNA 3'-terminal CCA addition is required both for tRNA processing and repair. Also involved in tRNA surveillance by mediating tandem CCA addition to generate a CCACCA at the 3' terminus of unstable tRNAs. While stable tRNAs receive only 3'-terminal CCA, unstable tRNAs are marked with CCACCA and rapidly degraded. This is Multifunctional CCA protein from Shewanella baltica (strain OS223).